The chain runs to 596 residues: Elongation factor 4 (596 aa).

The region spanning Arg-2–Thr-184 is the tr-type G domain. Residues Asp-14–Thr-19 and Asn-131–Asp-134 contribute to the GTP site.

It belongs to the TRAFAC class translation factor GTPase superfamily. Classic translation factor GTPase family. LepA subfamily.

It is found in the cell inner membrane. It carries out the reaction GTP + H2O = GDP + phosphate + H(+). Required for accurate and efficient protein synthesis under certain stress conditions. May act as a fidelity factor of the translation reaction, by catalyzing a one-codon backward translocation of tRNAs on improperly translocated ribosomes. Back-translocation proceeds from a post-translocation (POST) complex to a pre-translocation (PRE) complex, thus giving elongation factor G a second chance to translocate the tRNAs correctly. Binds to ribosomes in a GTP-dependent manner. This chain is Elongation factor 4, found in Xanthomonas oryzae pv. oryzae (strain PXO99A).